The following is a 171-amino-acid chain: MRAFLIGRWQPFHKGHLEIIKKISKEVDEIIIGIGSCQKSHTLTDPFTAGERMMMITKTLENYDINYYAIPINDIDYNAVWVSCVESLTPPFTTIYTGNSLVRELFSEKNYNVKKPELYNRTDYSGTKIRKKMLDGSNWEHLVPEEVVKVIEEIDGINRIRRLSEKDYDEE.

It belongs to the archaeal NMN adenylyltransferase family.

The protein localises to the cytoplasm. The catalysed reaction is beta-nicotinamide D-ribonucleotide + ATP + H(+) = diphosphate + NAD(+). Its pathway is cofactor biosynthesis; NAD(+) biosynthesis; NAD(+) from nicotinamide D-ribonucleotide: step 1/1. The chain is Nicotinamide-nucleotide adenylyltransferase from Methanococcus maripaludis (strain C6 / ATCC BAA-1332).